A 101-amino-acid chain; its full sequence is UPF0235 protein Maeo_0841 (101 aa).

Belongs to the UPF0235 family.

The protein is UPF0235 protein Maeo_0841 of Methanococcus aeolicus (strain ATCC BAA-1280 / DSM 17508 / OCM 812 / Nankai-3).